Here is a 724-residue protein sequence, read N- to C-terminus: Acyl-coenzyme A oxidase 2 (724 aa).

A disordered region spans residues 1–23 (MALISNLKDEYDHPTKTDPDTNP). The segment covering 7-21 (LKDEYDHPTKTDPDT) has biased composition (basic and acidic residues).

Belongs to the acyl-CoA oxidase family. FAD is required as a cofactor.

It localises to the peroxisome. The enzyme catalyses a 2,3-saturated acyl-CoA + O2 = a (2E)-enoyl-CoA + H2O2. It participates in lipid metabolism; peroxisomal fatty acid beta-oxidation. This Candida maltosa (Yeast) protein is Acyl-coenzyme A oxidase 2 (POX2).